Here is a 317-residue protein sequence, read N- to C-terminus: Methionyl-tRNA formyltransferase (317 aa).

Residue Ser-112–Pro-115 participates in (6S)-5,6,7,8-tetrahydrofolate binding.

It belongs to the Fmt family.

It catalyses the reaction L-methionyl-tRNA(fMet) + (6R)-10-formyltetrahydrofolate = N-formyl-L-methionyl-tRNA(fMet) + (6S)-5,6,7,8-tetrahydrofolate + H(+). Its function is as follows. Attaches a formyl group to the free amino group of methionyl-tRNA(fMet). The formyl group appears to play a dual role in the initiator identity of N-formylmethionyl-tRNA by promoting its recognition by IF2 and preventing the misappropriation of this tRNA by the elongation apparatus. The chain is Methionyl-tRNA formyltransferase from Histophilus somni (strain 129Pt) (Haemophilus somnus).